The following is a 564-amino-acid chain: Sphingomyelin phosphodiesterase 1 (564 aa).

A signal peptide spans 1 to 17 (MRIIYLISTVLLIYTNA). The 85-residue stretch at 37-121 (FQPLCISCTG…IILPDCADPT (85 aa)) folds into the Saposin B-type domain. Cystine bridges form between Cys-41-Cys-117, Cys-44-Cys-110, and Cys-72-Cys-83. Asn-151 carries an N-linked (GlcNAc...) asparagine glycan. Zn(2+)-binding residues include Asp-165 and His-167. 2 cysteine pairs are disulfide-bonded: Cys-180-Cys-185 and Cys-186-Cys-206. N-linked (GlcNAc...) asparagine glycosylation occurs at Asn-221. Zn(2+) contacts are provided by Asp-234 and Asn-274. A disulfide bond links Cys-341 and Cys-389. A glycan (N-linked (GlcNAc...) asparagine) is linked at Asn-351. Zn(2+) contacts are provided by His-381, His-415, and His-417. Asn-430 is a glycosylation site (N-linked (GlcNAc...) asparagine). Disulfide bonds link Cys-538–Cys-542 and Cys-548–Cys-561. Asn-556 carries an N-linked (GlcNAc...) asparagine glycan.

It belongs to the acid sphingomyelinase family. Zn(2+) serves as cofactor.

Its subcellular location is the secreted. The catalysed reaction is a sphingomyelin + H2O = phosphocholine + an N-acylsphing-4-enine + H(+). It catalyses the reaction an N-acyl-15-methylhexadecasphing-4-enine-1-phosphocholine + H2O = an N-acyl-15-methylhexadecasphing-4-enine + phosphocholine + H(+). Its pathway is lipid metabolism; sphingolipid metabolism. Sphingomyelin phosphodiesterase (sphingomyelinase) that converts sphingomyelin to ceramide (N-acyl-sphingoid base) and phosphocholine at acidic pH. Displays its enzymatic activity when secreted. May play distinct roles in signaling. The protein is Sphingomyelin phosphodiesterase 1 (asm-1) of Caenorhabditis elegans.